Reading from the N-terminus, the 433-residue chain is Signal recognition particle 54 kDa protein (433 aa).

GTP contacts are provided by residues 106–113 (GVEGSGKT), 186–190 (DTAGR), and 244–247 (TKMD).

This sequence belongs to the GTP-binding SRP family. SRP54 subfamily. In terms of assembly, part of the signal recognition particle protein translocation system, which is composed of SRP and FtsY. Archaeal SRP consists of a 7S RNA molecule of 300 nucleotides and two protein subunits: SRP54 and SRP19.

The protein localises to the cytoplasm. It catalyses the reaction GTP + H2O = GDP + phosphate + H(+). Its function is as follows. Involved in targeting and insertion of nascent membrane proteins into the cytoplasmic membrane. Binds to the hydrophobic signal sequence of the ribosome-nascent chain (RNC) as it emerges from the ribosomes. The SRP-RNC complex is then targeted to the cytoplasmic membrane where it interacts with the SRP receptor FtsY. This is Signal recognition particle 54 kDa protein from Pyrobaculum neutrophilum (strain DSM 2338 / JCM 9278 / NBRC 100436 / V24Sta) (Thermoproteus neutrophilus).